Here is a 175-residue protein sequence, read N- to C-terminus: Protein LAZY 3 (175 aa).

A disordered region spans residues 9 to 39 (RKLSGKKRVPTSDSSQEPSSPPLSKEVQGLP). Residues 44 to 50 (TFLAIGT) carry the IGT motif motif.

Belongs to the LAZY family. Specifically expressed in roots. Expressed in root tips of young seedlings.

Involved in the regulation of root gravitropism. Functions redundantly with LAZY2 and LAZY4 in the control of root gravitropism. Functions redundantly with LAZY1, LAZY2 and LAZY4 to control plant architecture by coupling gravity sensing to the formation of auxin gradients. This is Protein LAZY 3 from Arabidopsis thaliana (Mouse-ear cress).